The sequence spans 332 residues: Divalent cation transporter CmaX (332 aa).

At 1–277 (MQAYESGDER…MNRTMYLLGI (277 aa)) the chain is on the cytoplasmic side. Residues 278 to 286 (ITGFFLPMS) traverse the membrane as a helical segment. Residues 287–307 (FVTGLLGINVGGIPGADAPHG) are Periplasmic-facing. The chain crosses the membrane as a helical span at residues 308–323 (FWLACLLIGGVATFQW). At 324–332 (WVFRRLRWL) the chain is on the cytoplasmic side.

This sequence belongs to the CorA metal ion transporter (MIT) (TC 1.A.35) family. In terms of assembly, homopentamer.

It localises to the cell inner membrane. The catalysed reaction is Zn(2+)(in) = Zn(2+)(out). It carries out the reaction Cd(2+)(in) = Cd(2+)(out). The enzyme catalyses Ni(2+)(in) = Ni(2+)(out). It catalyses the reaction Co(2+)(in) = Co(2+)(out). Functionally, transports divalent cations including Zn(2+), Cd(2+), Ni(2+) and Co(2+). The proton gradient has a small influence on transport suggesting that the transport is probably not proton-dependent. This Pseudomonas aeruginosa (strain ATCC 15692 / DSM 22644 / CIP 104116 / JCM 14847 / LMG 12228 / 1C / PRS 101 / PAO1) protein is Divalent cation transporter CmaX.